Here is a 619-residue protein sequence, read N- to C-terminus: Sodium-coupled monocarboxylate transporter 2 (619 aa).

Residues 1-9 (MRVKNFEAW) lie on the Extracellular side of the membrane. A helical transmembrane segment spans residues 10–30 (DYVVFAGLFVISSGIGVFFAI). The Cytoplasmic segment spans residues 31-47 (KERKKTTSREFLVGGRQ). A helical membrane pass occupies residues 48–68 (MSFGPVALSLTASFMSAVTVL). The Extracellular segment spans residues 69–80 (GTPAEVYRFGAS). Residues 81 to 101 (FFLFLISYVFVVFFTSELFLP) form a helical membrane-spanning segment. Over 102–128 (VFYRSGITSTYEYLQLRFNKPVRYAAT) the chain is Cytoplasmic. A helical transmembrane segment spans residues 129 to 149 (IIYIVQTILYTGVVVYAPALA). At 150 to 157 (LNQVTGFN) the chain is on the extracellular side. The helical transmembrane segment at 158–178 (LWASVFATGIVCTFYCSLGGL) threads the bilayer. Residues 179–180 (KA) lie on the Cytoplasmic side of the membrane. The chain crosses the membrane as a helical span at residues 181–201 (VVWTDAFQMVVMIVGFLTVLI). Residues 202–235 (QGSNHVGGFNNVLEKAGNGSRLHIVDFDVDPLRR) lie on the Extracellular side of the membrane. N219 carries N-linked (GlcNAc...) asparagine glycosylation. A helical membrane pass occupies residues 236–256 (HTFWTITIGGTFTWLGVYGVN). Topologically, residues 257 to 275 (QSTIQRCISCKTEKHAKLA) are cytoplasmic. A helical transmembrane segment spans residues 276–296 (LYFNLLGLWIIVACAVFSGLI). The Extracellular portion of the chain corresponds to 297–321 (MYSHFKDCDPWTSGVISAPDQLMPY). A helical membrane pass occupies residues 322–342 (FVMEIFATMPGLPGLFVACAF). The Cytoplasmic segment spans residues 343–385 (SGTLSTVAASINALATVTFEDFVKSCFPHLSDKLSTWISKGLC). A helical membrane pass occupies residues 386–406 (ILFGIMCTSMAVVASLMGSVV). The Extracellular segment spans residues 407–411 (QAALS). The helical transmembrane segment at 412–432 (IHGMCGGPMLGLFTLGLVFPF) threads the bilayer. The Cytoplasmic portion of the chain corresponds to 433–437 (VNWKG). A helical membrane pass occupies residues 438–458 (ALGGLLTGITLSFWVAIGSFI). The Extracellular portion of the chain corresponds to 459-504 (YPAPESKTLPLPLSTEHCVELNITTTVAPQISSRPVLADTWYSLSY). N-linked (GlcNAc...) asparagine glycosylation occurs at N480. The chain crosses the membrane as a helical span at residues 505 to 525 (LYFSAVGCLGCIAAGIIISFL). Over 526-619 (TGKQRGKDID…NSVPEKTTYF (94 aa)) the chain is Cytoplasmic.

This sequence belongs to the sodium:solute symporter (SSF) (TC 2.A.21) family. In terms of tissue distribution, expressed in the cortical region of the kidney corresponding to the proximal tubule. Expressed in Mueller cells of the inner retina (at protein level). Isoform 1 is expressed in the retina, kidney, small intestine and skeletal muscle. Isoform 2 is not detected in the kidney, small intestine and skeletal muscle. In the kidney, expressed predominantly in tubular epithelial cells of the cortical region and in the convoluted portions of the proximal tubule (pars convoluta). In the small intestine, its expression is highest in the proximal part and gradually decreased towards the distal end. Expressed in the neural retina. Not detected in the caecum and colon.

It is found in the apical cell membrane. The enzyme catalyses (S)-lactate(out) + Na(+)(out) = (S)-lactate(in) + Na(+)(in). The catalysed reaction is nicotinate(out) + Na(+)(out) = nicotinate(in) + Na(+)(in). It carries out the reaction pyruvate(out) + Na(+)(out) = pyruvate(in) + Na(+)(in). It catalyses the reaction propanoate(out) + Na(+)(out) = propanoate(in) + Na(+)(in). The enzyme catalyses butanoate(out) + Na(+)(out) = butanoate(in) + Na(+)(in). The catalysed reaction is acetoacetate(out) + Na(+)(out) = acetoacetate(in) + Na(+)(in). Its function is as follows. Acts as an electroneutral and low-affinity sodium (Na(+))-dependent sodium-coupled solute transporter. Catalyzes the transport across the plasma membrane of many monocarboxylates such as lactate, pyruvate, nicotinate, propionate, butyrate and beta-D-hydroxybutyrate. May be responsible for the first step of reabsorption of monocarboxylates from the lumen of the proximal tubule of the kidney and the small intestine. May play also a role in monocarboxylates transport in the retina. Mediates electroneutral uptake of lactate, with a stoichiometry of 2 Na(+) for each lactate. This Mus musculus (Mouse) protein is Sodium-coupled monocarboxylate transporter 2 (Slc5a12).